The chain runs to 99 residues: Protein NCBP2AS2 (99 aa).

The disordered stretch occupies residues 76–99 (ELRRGLRGRSGPPPGSQRGPGANI).

The polypeptide is Protein NCBP2AS2 (Homo sapiens (Human)).